The primary structure comprises 514 residues: MNNLFALCQRSAVIFSIIFTVVACDKLDSPKPISPQIETQKNTQLESNRVELKRGVYSDLTLQPWQAQSEEQTQLLRDLFEGLTAYDVQGNLVPAVAENWQTEDNKTWIFTLRENAKWSNGEPITASDFVQSWQTLSQSESPLKNYLAFMNLKNAKAVLEKALPVESLGLFAENDRTLRIELDKASPYLPSMLAHVSLLPHYAKSTEIFISNGAYQLQRQAENQHILTTNPYYWAKEKVIFQQVKYQKISVDADLSDFDVVMNPKKVNQNIQDYPQLCTYFYEFNLSDPVLQKSAVRKAIVSMISTNNLVADIAHLYPNNTFLPKSMLGEQESVWEPVVAEQLFSQNQISETRPLKLRIRYDDLSLNQTIAMRLNHQLSQSDLLRVENQGMSWQELQTARTKGDFQLIRSGWCADFNDPAAFLNLFYSKSPDNKNGYKNAEFDRLFESAMTTISEKVRLENYAKLKGIVQQEHLVLPIFQYSTPVYLVPSIMGAQVNSVGVIYSKDLWRKVQSQ.

The first 23 residues, 1–23 (MNNLFALCQRSAVIFSIIFTVVA), serve as a signal peptide directing secretion. C24 is lipidated: N-palmitoyl cysteine. C24 carries S-diacylglycerol cysteine lipidation.

Belongs to the bacterial solute-binding protein 5 family.

It is found in the cell membrane. Functionally, part of a binding-protein-dependent transport system. The polypeptide is Putative binding protein HI_0213 (Haemophilus influenzae (strain ATCC 51907 / DSM 11121 / KW20 / Rd)).